Reading from the N-terminus, the 87-residue chain is Large ribosomal subunit protein bL31B (87 aa).

The protein belongs to the bacterial ribosomal protein bL31 family. Type B subfamily. In terms of assembly, part of the 50S ribosomal subunit.

The sequence is that of Large ribosomal subunit protein bL31B from Escherichia coli O8 (strain IAI1).